The primary structure comprises 158 residues: 6,7-dimethyl-8-ribityllumazine synthase (158 aa).

Residues Phe-24, 58 to 60 (AFE), and 82 to 84 (AVI) contribute to the 5-amino-6-(D-ribitylamino)uracil site. 87–88 (GT) lines the (2S)-2-hydroxy-3-oxobutyl phosphate pocket. Catalysis depends on His-90, which acts as the Proton donor. A 5-amino-6-(D-ribitylamino)uracil-binding site is contributed by Phe-115. Residue Arg-129 coordinates (2S)-2-hydroxy-3-oxobutyl phosphate.

Belongs to the DMRL synthase family. In terms of assembly, forms an icosahedral capsid composed of 60 subunits, arranged as a dodecamer of pentamers.

The enzyme catalyses (2S)-2-hydroxy-3-oxobutyl phosphate + 5-amino-6-(D-ribitylamino)uracil = 6,7-dimethyl-8-(1-D-ribityl)lumazine + phosphate + 2 H2O + H(+). It functions in the pathway cofactor biosynthesis; riboflavin biosynthesis; riboflavin from 2-hydroxy-3-oxobutyl phosphate and 5-amino-6-(D-ribitylamino)uracil: step 1/2. Catalyzes the formation of 6,7-dimethyl-8-ribityllumazine by condensation of 5-amino-6-(D-ribitylamino)uracil with 3,4-dihydroxy-2-butanone 4-phosphate. This is the penultimate step in the biosynthesis of riboflavin. The sequence is that of 6,7-dimethyl-8-ribityllumazine synthase from Ectopseudomonas mendocina (strain ymp) (Pseudomonas mendocina).